A 668-amino-acid chain; its full sequence is tRNA 5-methylaminomethyl-2-thiouridine biosynthesis bifunctional protein MnmC (668 aa).

Positions 1 to 245 (MKHYSIQPAN…KREMLCGVME (245 aa)) are tRNA (mnm(5)s(2)U34)-methyltransferase. An FAD-dependent cmnm(5)s(2)U34 oxidoreductase region spans residues 270-668 (IGGGIASALL…LLKGKAVKAG (399 aa)).

The protein in the N-terminal section; belongs to the methyltransferase superfamily. tRNA (mnm(5)s(2)U34)-methyltransferase family. It in the C-terminal section; belongs to the DAO family. Requires FAD as cofactor.

The protein resides in the cytoplasm. It carries out the reaction 5-aminomethyl-2-thiouridine(34) in tRNA + S-adenosyl-L-methionine = 5-methylaminomethyl-2-thiouridine(34) in tRNA + S-adenosyl-L-homocysteine + H(+). In terms of biological role, catalyzes the last two steps in the biosynthesis of 5-methylaminomethyl-2-thiouridine (mnm(5)s(2)U) at the wobble position (U34) in tRNA. Catalyzes the FAD-dependent demodification of cmnm(5)s(2)U34 to nm(5)s(2)U34, followed by the transfer of a methyl group from S-adenosyl-L-methionine to nm(5)s(2)U34, to form mnm(5)s(2)U34. This Escherichia coli (strain UTI89 / UPEC) protein is tRNA 5-methylaminomethyl-2-thiouridine biosynthesis bifunctional protein MnmC.